Consider the following 276-residue polypeptide: Putative pyruvate, phosphate dikinase regulatory protein 1 (276 aa).

150-157 lines the ADP pocket; the sequence is GLPRTSKT.

Belongs to the pyruvate, phosphate/water dikinase regulatory protein family. PDRP subfamily.

The catalysed reaction is N(tele)-phospho-L-histidyl/L-threonyl-[pyruvate, phosphate dikinase] + ADP = N(tele)-phospho-L-histidyl/O-phospho-L-threonyl-[pyruvate, phosphate dikinase] + AMP + H(+). The enzyme catalyses N(tele)-phospho-L-histidyl/O-phospho-L-threonyl-[pyruvate, phosphate dikinase] + phosphate + H(+) = N(tele)-phospho-L-histidyl/L-threonyl-[pyruvate, phosphate dikinase] + diphosphate. In terms of biological role, bifunctional serine/threonine kinase and phosphorylase involved in the regulation of the pyruvate, phosphate dikinase (PPDK) by catalyzing its phosphorylation/dephosphorylation. The protein is Putative pyruvate, phosphate dikinase regulatory protein 1 of Syntrophomonas wolfei subsp. wolfei (strain DSM 2245B / Goettingen).